Here is a 190-residue protein sequence, read N- to C-terminus: Somatotropin (190 aa).

Residue His-19 coordinates Zn(2+). A disulfide bond links Cys-52 and Cys-163. Ser-105 is modified (phosphoserine). Glu-172 lines the Zn(2+) pocket. Cys-180 and Cys-188 are joined by a disulfide.

It belongs to the somatotropin/prolactin family.

Its subcellular location is the secreted. Its function is as follows. Plays an important role in growth control. Its major role in stimulating body growth is to stimulate the liver and other tissues to secrete IGF1. It stimulates both the differentiation and proliferation of myoblasts. It also stimulates amino acid uptake and protein synthesis in muscle and other tissues. The chain is Somatotropin (GH1) from Vulpes vulpes (Red fox).